The sequence spans 219 residues: UPF0502 protein GSU0233 (219 aa).

The protein belongs to the UPF0502 family.

The polypeptide is UPF0502 protein GSU0233 (Geobacter sulfurreducens (strain ATCC 51573 / DSM 12127 / PCA)).